Reading from the N-terminus, the 283-residue chain is Thymidylate synthase (283 aa).

R22 provides a ligand contact to dUMP. C160 serves as the catalytic Nucleophile. Residues 180-183, N191, and 221-223 contribute to the dUMP site; these read RSCD and HIY. D183 provides a ligand contact to (6R)-5,10-methylene-5,6,7,8-tetrahydrofolate. A (6R)-5,10-methylene-5,6,7,8-tetrahydrofolate-binding site is contributed by S282.

The protein belongs to the thymidylate synthase family. Bacterial-type ThyA subfamily. As to quaternary structure, homodimer.

It is found in the cytoplasm. The enzyme catalyses dUMP + (6R)-5,10-methylene-5,6,7,8-tetrahydrofolate = 7,8-dihydrofolate + dTMP. It functions in the pathway pyrimidine metabolism; dTTP biosynthesis. Functionally, catalyzes the reductive methylation of 2'-deoxyuridine-5'-monophosphate (dUMP) to 2'-deoxythymidine-5'-monophosphate (dTMP) while utilizing 5,10-methylenetetrahydrofolate (mTHF) as the methyl donor and reductant in the reaction, yielding dihydrofolate (DHF) as a by-product. This enzymatic reaction provides an intracellular de novo source of dTMP, an essential precursor for DNA biosynthesis. The sequence is that of Thymidylate synthase from Vibrio vulnificus (strain YJ016).